The sequence spans 284 residues: Tropomyosin alpha-1 chain (284 aa).

Position 1 is an N-acetylmethionine (Met-1). The tract at residues 1 to 40 is disordered; the sequence is MDAIKKKMQMLKLDKENALDRAEQAESDKKASEDRSKQLE. The stretch at 1-284 forms a coiled coil; sequence MDAIKKKMQM…DHALNDMTSI (284 aa). A compositionally biased stretch (basic and acidic residues) spans 12-40; the sequence is KLDKENALDRAEQAESDKKASEDRSKQLE.

Homodimer. Heterodimer of an alpha (TPM1, TPM3 or TPM4) and a beta (TPM2) chain.

The protein resides in the cytoplasm. Its subcellular location is the cytoskeleton. Functionally, binds to actin filaments in muscle and non-muscle cells. Plays a central role, in association with the troponin complex, in the calcium dependent regulation of vertebrate striated muscle contraction. Smooth muscle contraction is regulated by interaction with caldesmon. In non-muscle cells is implicated in stabilizing cytoskeleton actin filaments. In Chelon auratus (Golden grey mullet), this protein is Tropomyosin alpha-1 chain.